We begin with the raw amino-acid sequence, 239 residues long: Phosphoadenosine 5'-phosphosulfate reductase (239 aa).

Cys235 serves as the catalytic Nucleophile; cysteine thiosulfonate intermediate.

The protein belongs to the PAPS reductase family. CysH subfamily.

Its subcellular location is the cytoplasm. It catalyses the reaction [thioredoxin]-disulfide + sulfite + adenosine 3',5'-bisphosphate + 2 H(+) = [thioredoxin]-dithiol + 3'-phosphoadenylyl sulfate. It participates in sulfur metabolism; hydrogen sulfide biosynthesis; sulfite from sulfate: step 3/3. Its function is as follows. Catalyzes the formation of sulfite from phosphoadenosine 5'-phosphosulfate (PAPS) using thioredoxin as an electron donor. This chain is Phosphoadenosine 5'-phosphosulfate reductase, found in Thiocapsa roseopersicina.